The following is a 176-amino-acid chain: Replication restart protein PriC (176 aa).

Belongs to the PriC family. In terms of assembly, component of the replication restart primosome, which is composed of PriA, PriB, PriC, DnaB and DnaT; DnaG primase associates transiently with this complex. Interacts with the C-terminus of SSB; this interaction is required to load the main replicative helicase onto substrate replication forks. Interacts with helicase DnaB alone and in the DnaB-DnaC complex, probably 1:1 binding with DnaB. Interacts with DnaT.

Functionally, involved in the restart of stalled replication forks, which reloads the DnaB replicative helicase on sites other than the origin of replication. Recognizes abandoned replication forks and remodels DNA single-stranded binding protein (SSB) on ssDNA to uncover a loading site for DnaB. There are several restart pathways, the PriA-PriC pathway is a minor restart pathway. Part of the minor PriC-Rep pathway for restart of stalled replication forks, which has a different substrate specificity than PriA. Part of the major restart pathway with PriA, PriB, DnaB, DnaT and DnaG primase. priB and priC have redundant roles in the cell. Binds 7-9 nucleotides of single-stranded (ss)DNA. In Klebsiella pneumoniae subsp. pneumoniae (strain ATCC 700721 / MGH 78578), this protein is Replication restart protein PriC.